Here is a 141-residue protein sequence, read N- to C-terminus: Large ribosomal subunit protein uL11 (141 aa).

This sequence belongs to the universal ribosomal protein uL11 family. Part of the ribosomal stalk of the 50S ribosomal subunit. Interacts with L10 and the large rRNA to form the base of the stalk. L10 forms an elongated spine to which L12 dimers bind in a sequential fashion forming a multimeric L10(L12)X complex. Post-translationally, one or more lysine residues are methylated.

Forms part of the ribosomal stalk which helps the ribosome interact with GTP-bound translation factors. This chain is Large ribosomal subunit protein uL11, found in Prosthecochloris aestuarii (strain DSM 271 / SK 413).